The following is a 161-amino-acid chain: ATP synthase subunit b' (161 aa).

A helical transmembrane segment spans residues Val30–Tyr47.

It belongs to the ATPase B chain family. In terms of assembly, F-type ATPases have 2 components, F(1) - the catalytic core - and F(0) - the membrane proton channel. F(1) has five subunits: alpha(3), beta(3), gamma(1), delta(1), epsilon(1). F(0) has four main subunits: a(1), b(1), b'(1) and c(10-14). The alpha and beta chains form an alternating ring which encloses part of the gamma chain. F(1) is attached to F(0) by a central stalk formed by the gamma and epsilon chains, while a peripheral stalk is formed by the delta, b and b' chains.

It localises to the cellular thylakoid membrane. F(1)F(0) ATP synthase produces ATP from ADP in the presence of a proton or sodium gradient. F-type ATPases consist of two structural domains, F(1) containing the extramembraneous catalytic core and F(0) containing the membrane proton channel, linked together by a central stalk and a peripheral stalk. During catalysis, ATP synthesis in the catalytic domain of F(1) is coupled via a rotary mechanism of the central stalk subunits to proton translocation. Its function is as follows. Component of the F(0) channel, it forms part of the peripheral stalk, linking F(1) to F(0). The b'-subunit is a diverged and duplicated form of b found in plants and photosynthetic bacteria. This Picosynechococcus sp. (strain ATCC 27264 / PCC 7002 / PR-6) (Agmenellum quadruplicatum) protein is ATP synthase subunit b'.